The sequence spans 392 residues: S-adenosylmethionine synthase (392 aa).

Histidine 20 is an ATP binding site. Residue aspartate 22 coordinates Mg(2+). Glutamate 48 contacts K(+). Positions 61 and 106 each coordinate L-methionine. The tract at residues 106-116 (QSQDIINAIKK) is flexible loop. Residues 171–173 (DSK), aspartate 248, 254–255 (RK), alanine 271, and lysine 275 each bind ATP. An L-methionine-binding site is contributed by aspartate 248. L-methionine is bound at residue lysine 279.

This sequence belongs to the AdoMet synthase family. In terms of assembly, homotetramer; dimer of dimers. Requires Mg(2+) as cofactor. It depends on K(+) as a cofactor.

It localises to the cytoplasm. It catalyses the reaction L-methionine + ATP + H2O = S-adenosyl-L-methionine + phosphate + diphosphate. It participates in amino-acid biosynthesis; S-adenosyl-L-methionine biosynthesis; S-adenosyl-L-methionine from L-methionine: step 1/1. Its function is as follows. Catalyzes the formation of S-adenosylmethionine (AdoMet) from methionine and ATP. The overall synthetic reaction is composed of two sequential steps, AdoMet formation and the subsequent tripolyphosphate hydrolysis which occurs prior to release of AdoMet from the enzyme. The polypeptide is S-adenosylmethionine synthase (Borrelia garinii subsp. bavariensis (strain ATCC BAA-2496 / DSM 23469 / PBi) (Borreliella bavariensis)).